A 55-amino-acid chain; its full sequence is Large ribosomal subunit protein bL33A (55 aa).

It belongs to the bacterial ribosomal protein bL33 family.

The chain is Large ribosomal subunit protein bL33A from Mycobacterium sp. (strain JLS).